A 491-amino-acid polypeptide reads, in one-letter code: Protein nucleotidyltransferase YdiU (491 aa).

8 residues coordinate ATP: G94, G96, R97, K117, D129, G130, R180, and R187. D256 functions as the Proton acceptor in the catalytic mechanism. Mg(2+)-binding residues include N257 and D266. ATP is bound at residue D266.

The protein belongs to the SELO family. Mg(2+) is required as a cofactor. The cofactor is Mn(2+).

It catalyses the reaction L-seryl-[protein] + ATP = 3-O-(5'-adenylyl)-L-seryl-[protein] + diphosphate. The catalysed reaction is L-threonyl-[protein] + ATP = 3-O-(5'-adenylyl)-L-threonyl-[protein] + diphosphate. The enzyme catalyses L-tyrosyl-[protein] + ATP = O-(5'-adenylyl)-L-tyrosyl-[protein] + diphosphate. It carries out the reaction L-histidyl-[protein] + UTP = N(tele)-(5'-uridylyl)-L-histidyl-[protein] + diphosphate. It catalyses the reaction L-seryl-[protein] + UTP = O-(5'-uridylyl)-L-seryl-[protein] + diphosphate. The catalysed reaction is L-tyrosyl-[protein] + UTP = O-(5'-uridylyl)-L-tyrosyl-[protein] + diphosphate. Functionally, nucleotidyltransferase involved in the post-translational modification of proteins. It can catalyze the addition of adenosine monophosphate (AMP) or uridine monophosphate (UMP) to a protein, resulting in modifications known as AMPylation and UMPylation. This is Protein nucleotidyltransferase YdiU from Bacillus cytotoxicus (strain DSM 22905 / CIP 110041 / 391-98 / NVH 391-98).